The chain runs to 485 residues: Ribosomal protein uS12 methylthiotransferase RimO (485 aa).

Positions 37–147 constitute an MTTase N-terminal domain; sequence SRIGFVSLGC…VVEQVHEHLP (111 aa). [4Fe-4S] cluster contacts are provided by Cys-46, Cys-82, Cys-111, Cys-179, Cys-183, and Cys-186. The 238-residue stretch at 165 to 402 folds into the Radical SAM core domain; sequence LTPRHYAYLK…MEVQGEISAA (238 aa). Residues 405–471 form the TRAM domain; it reads KARIGNEYQV…EHDVWAVLSE (67 aa).

The protein belongs to the methylthiotransferase family. RimO subfamily. [4Fe-4S] cluster is required as a cofactor.

It localises to the cytoplasm. It carries out the reaction L-aspartate(89)-[ribosomal protein uS12]-hydrogen + (sulfur carrier)-SH + AH2 + 2 S-adenosyl-L-methionine = 3-methylsulfanyl-L-aspartate(89)-[ribosomal protein uS12]-hydrogen + (sulfur carrier)-H + 5'-deoxyadenosine + L-methionine + A + S-adenosyl-L-homocysteine + 2 H(+). In terms of biological role, catalyzes the methylthiolation of an aspartic acid residue of ribosomal protein uS12. This is Ribosomal protein uS12 methylthiotransferase RimO from Alteromonas mediterranea (strain DSM 17117 / CIP 110805 / LMG 28347 / Deep ecotype).